The chain runs to 49 residues: Thymopoietin-1 (49 aa).

The 44-residue stretch at 4–47 folds into the LEM-like domain; it reads LEDPSVLTKEKLKSELVANNVTLPAGEQRKDVYVELYLQHLTAL. The segment at 32-36 is biological activity; the sequence is RKDVY.

It belongs to the thymopoietin family.

Its function is as follows. Hormone of the thymus with pleiotropic actions on prothymocytes, mature T-cells, the nicotinic acetylcholine receptor, and pituitary corticotrophs. The sequence is that of Thymopoietin-1 from Bos taurus (Bovine).